The chain runs to 126 residues: Large ribosomal subunit protein bL12 (126 aa).

Belongs to the bacterial ribosomal protein bL12 family. As to quaternary structure, homodimer. Part of the ribosomal stalk of the 50S ribosomal subunit. Forms a multimeric L10(L12)X complex, where L10 forms an elongated spine to which 2 to 4 L12 dimers bind in a sequential fashion. Binds GTP-bound translation factors.

Its function is as follows. Forms part of the ribosomal stalk which helps the ribosome interact with GTP-bound translation factors. Is thus essential for accurate translation. In Geotalea daltonii (strain DSM 22248 / JCM 15807 / FRC-32) (Geobacter daltonii), this protein is Large ribosomal subunit protein bL12.